The chain runs to 318 residues: Ferrochelatase (318 aa).

Residues H186 and E264 each coordinate Fe cation.

This sequence belongs to the ferrochelatase family.

The protein resides in the cytoplasm. The enzyme catalyses heme b + 2 H(+) = protoporphyrin IX + Fe(2+). It functions in the pathway porphyrin-containing compound metabolism; protoheme biosynthesis; protoheme from protoporphyrin-IX: step 1/1. Functionally, catalyzes the ferrous insertion into protoporphyrin IX. The sequence is that of Ferrochelatase from Chlamydia caviae (strain ATCC VR-813 / DSM 19441 / 03DC25 / GPIC) (Chlamydophila caviae).